The following is a 508-amino-acid chain: Photosystem II CP47 reaction center protein (508 aa).

6 helical membrane-spanning segments follow: residues 21 to 36, 101 to 115, 140 to 156, 203 to 218, 237 to 252, and 457 to 472; these read AVHLMHTALVSGWAGS, IILSGLLFLAAIWHW, GIHLFLSGVLCFGFGAF, IAAGILGIIAGLFHLS, VLSSSIAAVFWAAFVV, and NFALLFFFGHIWHGSR.

It belongs to the PsbB/PsbC family. PsbB subfamily. In terms of assembly, PSII is composed of 1 copy each of membrane proteins PsbA, PsbB, PsbC, PsbD, PsbE, PsbF, PsbH, PsbI, PsbJ, PsbK, PsbL, PsbM, PsbT, PsbX, PsbY, PsbZ, Psb30/Ycf12, at least 3 peripheral proteins of the oxygen-evolving complex and a large number of cofactors. It forms dimeric complexes. The cofactor is Binds multiple chlorophylls. PSII binds additional chlorophylls, carotenoids and specific lipids..

The protein localises to the plastid. It localises to the chloroplast thylakoid membrane. Its function is as follows. One of the components of the core complex of photosystem II (PSII). It binds chlorophyll and helps catalyze the primary light-induced photochemical processes of PSII. PSII is a light-driven water:plastoquinone oxidoreductase, using light energy to abstract electrons from H(2)O, generating O(2) and a proton gradient subsequently used for ATP formation. This is Photosystem II CP47 reaction center protein from Staurastrum punctulatum (Green alga).